Consider the following 462-residue polypeptide: ATP synthase subunit beta (462 aa).

Residue 151–158 (GGAGVGKT) participates in ATP binding.

The protein belongs to the ATPase alpha/beta chains family. As to quaternary structure, F-type ATPases have 2 components, CF(1) - the catalytic core - and CF(0) - the membrane proton channel. CF(1) has five subunits: alpha(3), beta(3), gamma(1), delta(1), epsilon(1). CF(0) has four main subunits: a(1), b(1), b'(1) and c(9-12).

It localises to the cell inner membrane. It carries out the reaction ATP + H2O + 4 H(+)(in) = ADP + phosphate + 5 H(+)(out). Produces ATP from ADP in the presence of a proton gradient across the membrane. The catalytic sites are hosted primarily by the beta subunits. This Chlorobium limicola (strain DSM 245 / NBRC 103803 / 6330) protein is ATP synthase subunit beta.